We begin with the raw amino-acid sequence, 167 residues long: UPF0225 protein VV1358 (167 aa).

This sequence belongs to the UPF0225 family.

This Vibrio vulnificus (strain YJ016) protein is UPF0225 protein VV1358.